Here is a 336-residue protein sequence, read N- to C-terminus: Eukaryotic translation initiation factor 3 subunit I (336 aa).

5 WD repeats span residues 8-47 (GHERSLTQIKFNRDGDLLFSVSKDKIVCAWWTANGERLGT), 50-91 (GHLG…KVWE), 146-185 (CNESKATVAGWSYLGKYIIAGHEDGSVSQYDAKTGDQLEN), 190-229 (EFDHQINDIQFSADRTYFITASKDKSAKLISSRNLAILKT), and 287-326 (GHFGPLNTVGVHPNGTAYASGGEDGYVRVHHFDKPYFDFM).

The protein belongs to the eIF-3 subunit I family. In terms of assembly, component of the eukaryotic translation initiation factor 3 (eIF-3) complex.

The protein resides in the cytoplasm. Component of the eukaryotic translation initiation factor 3 (eIF-3) complex, which is involved in protein synthesis of a specialized repertoire of mRNAs and, together with other initiation factors, stimulates binding of mRNA and methionyl-tRNAi to the 40S ribosome. The eIF-3 complex specifically targets and initiates translation of a subset of mRNAs involved in cell proliferation. The sequence is that of Eukaryotic translation initiation factor 3 subunit I (tif34) from Aspergillus terreus (strain NIH 2624 / FGSC A1156).